The chain runs to 563 residues: BOS complex subunit NCLN (563 aa).

Residues 1 to 42 form the signal peptide; it reads MLEEAGEVLENVLKASCLPLGFIVFLPAVLLLVAPPLPAADA. Topologically, residues 43–522 are lumenal; it reads AHEFTVYRMQ…VMNAYRVKPA (480 aa). 2 N-linked (GlcNAc...) asparagine glycosylation sites follow: Asn-241 and Asn-428. A helical transmembrane segment spans residues 523 to 543; that stretch reads IFDLLLALCIGAYLGMAYTAV. Topologically, residues 544–563 are cytoplasmic; that stretch reads QHFHVLYKTVQRLLLKAKAQ.

Belongs to the nicastrin family. As to quaternary structure, component of the back of Sec61 (BOS) complex, composed of NCLN/Nicalin, NOMO1 and TMEM147. The BOS complex is part of the multi-pass translocon (MPT) complex, composed of three subcomplexes, the GEL complex (composed of RAB5IF/OPTI and TMCO1), the BOS complex (composed of NCLN/Nicalin, NOMO1 and TMEM147) and the PAT complex (composed of WDR83OS/Asterix and CCDC47). The MPT complex associates with the SEC61 complex.

The protein localises to the endoplasmic reticulum membrane. In terms of biological role, component of the multi-pass translocon (MPT) complex that mediates insertion of multi-pass membrane proteins into the lipid bilayer of membranes. The MPT complex takes over after the SEC61 complex: following membrane insertion of the first few transmembrane segments of proteins by the SEC61 complex, the MPT complex occludes the lateral gate of the SEC61 complex to promote insertion of subsequent transmembrane regions. May antagonize Nodal signaling and subsequent organization of axial structures during mesodermal patterning, via its interaction with NOMO. The sequence is that of BOS complex subunit NCLN (Ncln) from Mus musculus (Mouse).